A 968-amino-acid chain; its full sequence is Angiomotin-like protein 1 (968 aa).

Polar residues-rich tracts occupy residues 152-164 (VYQSARQEPQGQE) and 177-187 (RSTQPQQNNEE). Residues 152 to 258 (VYQSARQEPQ…NRANSGQAHK (107 aa)) form a disordered region. Residues 203–224 (GQQQQQQQQQQQQQQQQQQGQG) show a composition bias toward low complexity. Phosphoserine is present on residues S253, S281, and S307. A coiled-coil region spans residues 271-291 (RSLSERIMQLSLERNGAKQHL). The tract at residues 285-343 (NGAKQHLPSSGNGKSFKAGGEPSPAQPVCKALDPRGPPPEYPFKTKPMKSPVSKNQDHG) is disordered. Coiled coils occupy residues 449 to 645 (VERA…RRLR) and 676 to 705 (ALMELVREKEERILALEADMTKWEQKYLEE). The interval 721-742 (AERDTTISNHSRNGSYGESSLE) is disordered. Polar residues predominate over residues 726–738 (TISNHSRNGSYGE). S731 carries the phosphoserine modification. A coiled-coil region spans residues 748 to 773 (EEEEVVQANRRCQDMEYTIKNLHAKI). Positions 785 to 834 (QRSRKDAGKTDSASLRPARSVPSIAAATGTHSRQTSLTSSQLTEEKKEEK) are disordered. Residues S804, S816, and S840 each carry the phosphoserine modification. Residues 853–878 (ASAPLLPTTPASALSLPASTTSASST) show a composition bias toward low complexity. The interval 853-956 (ASAPLLPTTP…GRVSNLLHKP (104 aa)) is disordered. Phosphoserine is present on residues S912 and S918. A PDZ-binding motif is present at residues 965-968 (EVLI).

The protein belongs to the angiomotin family. Post-translationally, polyubiquitinated by NEDD4, leading to proteasomal degradation. As to expression, expressed in exocrine glands, including pancreas, submandibular gland, lacrimal gland, parotid gland and sublingual gland (at protein level).

The protein localises to the cell junction. It is found in the tight junction. Functionally, inhibits the Wnt/beta-catenin signaling pathway, probably by recruiting CTNNB1 to recycling endosomes and hence preventing its translocation to the nucleus. This Mus musculus (Mouse) protein is Angiomotin-like protein 1 (Amotl1).